The sequence spans 102 residues: UPF0235 protein msl4154 (102 aa).

This sequence belongs to the UPF0235 family.

The sequence is that of UPF0235 protein msl4154 from Mesorhizobium japonicum (strain LMG 29417 / CECT 9101 / MAFF 303099) (Mesorhizobium loti (strain MAFF 303099)).